Here is a 67-residue protein sequence, read N- to C-terminus: Large ribosomal subunit protein bL35 (67 aa).

The segment at 22–45 is disordered; that stretch reads GKIKRWKSGGAHYNTKKSSKRKRH. A compositionally biased stretch (basic residues) spans 35–45; it reads NTKKSSKRKRH.

Belongs to the bacterial ribosomal protein bL35 family.

This chain is Large ribosomal subunit protein bL35, found in Aquifex aeolicus (strain VF5).